Consider the following 441-residue polypeptide: MKERSTELVQGFRHSVPYINAHRGKTFVVMLGGEAIEHENFSSIVNDIGLLHSLGIRLVVVYGARPQIDSNLAQHHYEPVYHKHTRVTDARTLEMVKQAAGLLQLDITARLSMSLNNTPLQGAHINVVSGNFIIAQPLGVDDGVDYCHSGRIRRIDEEAIHRQLDNGAIVLLGPVAVSVTGESFNLTSEEVATQLAIKLKAEKMIGFCSSQGVTDSEGNIISELFPNDAQKRIEDLEQEGDYNSGTVRFLRGAVKACRSGVRRSHLLSYQEDGALVQELFSRDGIGTQIVMESAEQVRRATINDIGGILELIRPLEQQGILVRRSREQLEMEIDKFTIIERDNLTIACAALYPFPEEQIGEMACVAVHPDYRSSSRGEMLLKRVANQARQMGLKKLFVLTTRSIHWFQERGFTPAEVDVLPIQKQELYNYQRRSKILLADL.

In terms of domain architecture, N-acetyltransferase spans Glu295 to Ser434.

Belongs to the acetyltransferase family. ArgA subfamily. In terms of assembly, homohexamer.

The protein resides in the cytoplasm. The enzyme catalyses L-glutamate + acetyl-CoA = N-acetyl-L-glutamate + CoA + H(+). It functions in the pathway amino-acid biosynthesis; L-arginine biosynthesis; N(2)-acetyl-L-ornithine from L-glutamate: step 1/4. The polypeptide is Amino-acid acetyltransferase (Yersinia enterocolitica serotype O:8 / biotype 1B (strain NCTC 13174 / 8081)).